The primary structure comprises 428 residues: Enolase 1 (428 aa).

A (2R)-2-phosphoglycerate-binding site is contributed by glutamine 167. The Proton donor role is filled by glutamate 209. Aspartate 246, glutamate 288, and aspartate 315 together coordinate Mg(2+). Lysine 340, arginine 369, serine 370, and lysine 391 together coordinate (2R)-2-phosphoglycerate. The active-site Proton acceptor is lysine 340.

Belongs to the enolase family. As to quaternary structure, component of the RNA degradosome, a multiprotein complex involved in RNA processing and mRNA degradation. The cofactor is Mg(2+).

It localises to the cytoplasm. The protein localises to the secreted. The protein resides in the cell surface. It catalyses the reaction (2R)-2-phosphoglycerate = phosphoenolpyruvate + H2O. It participates in carbohydrate degradation; glycolysis; pyruvate from D-glyceraldehyde 3-phosphate: step 4/5. Functionally, catalyzes the reversible conversion of 2-phosphoglycerate (2-PG) into phosphoenolpyruvate (PEP). It is essential for the degradation of carbohydrates via glycolysis. This is Enolase 1 from Pseudomonas syringae pv. tomato (strain ATCC BAA-871 / DC3000).